The sequence spans 1895 residues: 1,3-beta-glucan synthase component GSC2 (1895 aa).

Polar residues-rich tracts occupy residues 1–16 (MSYN…YSNG) and 25–34 (PTYQVTQDQS). Disordered stretches follow at residues 1-143 (MSYN…PYGN) and 269-292 (ARKA…EETL). Residues 1–473 (MSYNDPNLNG…WLHLVTNFNR (473 aa)) lie on the Extracellular side of the membrane. Over residues 65–78 (QFPQGQDPSQDQGP) the composition is skewed to low complexity. Polar residues-rich tracts occupy residues 79–107 (YNND…SDFS) and 115–141 (TYPN…STPY). Over residues 269-278 (ARKAKKKNKK) the composition is skewed to basic residues. Lys278 is covalently cross-linked (Glycyl lysine isopeptide (Lys-Gly) (interchain with G-Cter in ubiquitin)). A phosphothreonine mark is found at Thr288 and Thr291. Lys405 is covalently cross-linked (Glycyl lysine isopeptide (Lys-Gly) (interchain with G-Cter in ubiquitin)). Residues 474-494 (IWIMHISVYWMYCAYNAPTFY) traverse the membrane as a helical segment. At 495-511 (THNYQQLVDNQPLAAYK) the chain is on the cytoplasmic side. The chain crosses the membrane as a helical span at residues 512–532 (WATAALGGTVASLIQVAATLC). At 533-550 (EWSFVPRKWAGAQHLSRR) the chain is on the extracellular side. Residues 551 to 571 (FWFLCVIMGINLGPVIFVFAY) traverse the membrane as a helical segment. The Cytoplasmic portion of the chain corresponds to 572 to 582 (DKDTVYSTAAH). The chain crosses the membrane as a helical span at residues 583 to 603 (VVGAVMFFVAVATLVFFSVMP). The Extracellular portion of the chain corresponds to 604 to 1579 (LGGLFTSYMK…DASRAHRTNL (976 aa)). Residues Lys929, Lys934, Lys1558, and Lys1566 each participate in a glycyl lysine isopeptide (Lys-Gly) (interchain with G-Cter in ubiquitin) cross-link. A helical transmembrane segment spans residues 1580 to 1600 (IMAEIIPCAIYAAGCFIAFTF). The Cytoplasmic portion of the chain corresponds to 1601–1620 (INAQTGVKTTDEDRVNSTLR). A helical transmembrane segment spans residues 1621–1641 (IIICTLAPIVIDIGVLFFCMG). The Extracellular segment spans residues 1642–1758 (LSCCSGPLLG…LTAKVIELSE (117 aa)). A helical transmembrane segment spans residues 1759–1779 (FAADFVLGHVILIFQLPVICI). The Cytoplasmic segment spans residues 1780–1821 (PKIDKFHSIMLFWLKPSRQIRPPIYSLKQARLRKRMVRRYCS). A helical membrane pass occupies residues 1822-1842 (LYFLVLIIFAGCIVGPAVASA). Residues 1843–1895 (HVPKDLGSGLTGTFHNLVQPRNVSNNDTGSQMSTYKSHYYTHTPSLKTWSTIK) are Extracellular-facing.

The protein belongs to the glycosyltransferase 48 family. As to quaternary structure, component of the 1,3-beta-glucan synthase (GS) complex, composed of two alternate catalytic subunits FKS1 or GSC2, and a regulatory subunit RHO1. Interacts with SMK1.

It is found in the membrane. It carries out the reaction [(1-&gt;3)-beta-D-glucosyl](n) + UDP-alpha-D-glucose = [(1-&gt;3)-beta-D-glucosyl](n+1) + UDP + H(+). In terms of biological role, alternate catalytic subunit of the 1,3-beta-glucan synthase (GS) complex. Synthesizes 1,3-beta-glucan, a major structural component of the yeast cell wall. Required for spore wall assembly. Negative regulation of activity by SMK1 is important for spore wall deposition. Activity is positively regulated by RHO1. The polypeptide is 1,3-beta-glucan synthase component GSC2 (Saccharomyces cerevisiae (strain ATCC 204508 / S288c) (Baker's yeast)).